Consider the following 474-residue polypeptide: Lysosomal protective protein (474 aa).

Residues 1-23 (MPGTALSPLLLLLLLSWASRNEA) form the signal peptide. 4 disulfides stabilise this stretch: Cys83–Cys356, Cys235–Cys251, Cys236–Cys241, and Cys276–Cys325. Asn140 carries N-linked (GlcNAc...) (high mannose) asparagine glycosylation. Ser173 is an active-site residue. The N-linked (GlcNAc...) (high mannose) asparagine glycan is linked to Asn327. Active-site residues include Asp394 and His451.

Belongs to the peptidase S10 family. As to quaternary structure, heterodimer of a 32 kDa chain and a 20 kDa chain; disulfide-linked.

The protein resides in the lysosome. The catalysed reaction is Release of a C-terminal amino acid with broad specificity.. Functionally, protective protein appears to be essential for both the activity of beta-galactosidase and neuraminidase, it associates with these enzymes and exerts a protective function necessary for their stability and activity. This protein is also a carboxypeptidase and can deamidate tachykinins. This is Lysosomal protective protein (Ctsa) from Mus musculus (Mouse).